The sequence spans 871 residues: Rho guanine nucleotide exchange factor 26 (871 aa).

3 disordered regions span residues 1–49 (MDGE…LLIT), 86–233 (AQRR…NPSV), and 288–310 (PLGH…SLRR). Ser22 bears the Phosphoserine mark. Over residues 136 to 156 (PAPPPPPVLRPPRTPNAPAPC) the composition is skewed to pro residues. Polar residues predominate over residues 173-192 (PTANGLAANNDSPGSGSQSG). Ser392 is modified (phosphoserine). One can recognise a DH domain in the interval 439 to 623 (KRQEAIFEVI…SKLVRLCNEG (185 aa)). In terms of domain architecture, PH spans 655–782 (WLVKRGELTA…WITALGHSSG (128 aa)). The SH3 domain occupies 789–850 (TSLTQVEIVR…PMECAKEITC (62 aa)).

As to quaternary structure, interacts with ICAM1 and RHOG. In terms of tissue distribution, isoform 1 is broadly expressed, with highest levels in liver (at protein level). Certain mRNA species appear to be specifically expressed in prostate and liver.

Its subcellular location is the cell projection. The protein resides in the ruffle. Its function is as follows. Activates RhoG GTPase by promoting the exchange of GDP by GTP. Required for the formation of membrane ruffles during macropinocytosis. Required for the formation of cup-like structures during trans-endothelial migration of leukocytes. In case of Salmonella enterica infection, activated by SopB, which induces cytoskeleton rearrangements and promotes bacterial entry. This Homo sapiens (Human) protein is Rho guanine nucleotide exchange factor 26 (ARHGEF26).